We begin with the raw amino-acid sequence, 330 residues long: Elongation factor Ts (330 aa).

The interval 79 to 82 (TDFV) is involved in Mg(2+) ion dislocation from EF-Tu.

This sequence belongs to the EF-Ts family.

It is found in the cytoplasm. Associates with the EF-Tu.GDP complex and induces the exchange of GDP to GTP. It remains bound to the aminoacyl-tRNA.EF-Tu.GTP complex up to the GTP hydrolysis stage on the ribosome. The sequence is that of Elongation factor Ts from Bacteroides thetaiotaomicron (strain ATCC 29148 / DSM 2079 / JCM 5827 / CCUG 10774 / NCTC 10582 / VPI-5482 / E50).